A 156-amino-acid polypeptide reads, in one-letter code: FAD synthase (156 aa).

Residues 9–10 (TF), 14–17 (HPGH), asparagine 92, and histidine 119 each bind ATP.

Belongs to the archaeal FAD synthase family. As to quaternary structure, homodimer. A divalent metal cation serves as cofactor.

It carries out the reaction FMN + ATP + H(+) = FAD + diphosphate. It participates in cofactor biosynthesis; FAD biosynthesis; FAD from FMN: step 1/1. Functionally, catalyzes the transfer of the AMP portion of ATP to flavin mononucleotide (FMN) to produce flavin adenine dinucleotide (FAD) coenzyme. The sequence is that of FAD synthase from Methanospirillum hungatei JF-1 (strain ATCC 27890 / DSM 864 / NBRC 100397 / JF-1).